A 360-amino-acid chain; its full sequence is Glutamate 5-kinase (360 aa).

Lysine 7 is an ATP binding site. Substrate-binding residues include serine 47, aspartate 134, and asparagine 146. ATP-binding positions include 166 to 167 and 210 to 216; these read TD and TGGITTK. In terms of domain architecture, PUA spans 275-348; it reads VGQITLDEGA…LNKKENINSS (74 aa).

This sequence belongs to the glutamate 5-kinase family.

It localises to the cytoplasm. It carries out the reaction L-glutamate + ATP = L-glutamyl 5-phosphate + ADP. Its pathway is amino-acid biosynthesis; L-proline biosynthesis; L-glutamate 5-semialdehyde from L-glutamate: step 1/2. Catalyzes the transfer of a phosphate group to glutamate to form L-glutamate 5-phosphate. The chain is Glutamate 5-kinase from Prochlorococcus marinus subsp. pastoris (strain CCMP1986 / NIES-2087 / MED4).